A 184-amino-acid chain; its full sequence is Peptide deformylase (184 aa).

Residues Cys99 and His141 each coordinate Fe cation. The active site involves Glu142. Position 145 (His145) interacts with Fe cation.

Belongs to the polypeptide deformylase family. It depends on Fe(2+) as a cofactor.

It catalyses the reaction N-terminal N-formyl-L-methionyl-[peptide] + H2O = N-terminal L-methionyl-[peptide] + formate. Its function is as follows. Removes the formyl group from the N-terminal Met of newly synthesized proteins. Requires at least a dipeptide for an efficient rate of reaction. N-terminal L-methionine is a prerequisite for activity but the enzyme has broad specificity at other positions. The chain is Peptide deformylase from Chlamydia abortus (strain DSM 27085 / S26/3) (Chlamydophila abortus).